Reading from the N-terminus, the 154-residue chain is UPF0127 protein TSIB_1463 (154 aa).

Belongs to the UPF0127 family.

In Thermococcus sibiricus (strain DSM 12597 / MM 739), this protein is UPF0127 protein TSIB_1463.